Reading from the N-terminus, the 423-residue chain is MSNKGIQSIRGFSDILPEESPLWQYAESAIRRVLESYGYREIRLPVLERTELFSRSIGEVTDIVEKEMYTFDDRNGDSVTLRPEGTAGCVRAGIQSGLLHNAEPRLWYAGPMFRHERPQKGRLRQFHQVGAEVFGIPEPELDAEMIIMTARMLRELGLSDVRLQLNSLGTPESRAAHREQLVAYLRRHEDRLDEDARRRLETNPLRIFDSKNPQVQQVMADAPRLMDCLDSVSAEHFTVVRNLLERAGVEYEVNPSLVRGLDYYTRTVFEWVTDRLGAQGTVCAGGRFDGLVEQLGGRPTPAIGFALGLERLVALLEDQGTPGQGGAPHAYLVVATEAGAGLEMAEALRDALPALRVQMHAGGGGFKAQLKRADRSGARVALILGDDEQAAGALTIKDLRGEDGQQRLPLDDAVTYLRGLIGA.

Belongs to the class-II aminoacyl-tRNA synthetase family. As to quaternary structure, homodimer.

It localises to the cytoplasm. The catalysed reaction is tRNA(His) + L-histidine + ATP = L-histidyl-tRNA(His) + AMP + diphosphate + H(+). This is Histidine--tRNA ligase from Halorhodospira halophila (strain DSM 244 / SL1) (Ectothiorhodospira halophila (strain DSM 244 / SL1)).